Reading from the N-terminus, the 293-residue chain is Ribosomal protein L11 methyltransferase (293 aa).

S-adenosyl-L-methionine contacts are provided by threonine 145, glycine 166, aspartate 188, and asparagine 230.

The protein belongs to the methyltransferase superfamily. PrmA family.

The protein localises to the cytoplasm. It carries out the reaction L-lysyl-[protein] + 3 S-adenosyl-L-methionine = N(6),N(6),N(6)-trimethyl-L-lysyl-[protein] + 3 S-adenosyl-L-homocysteine + 3 H(+). Its function is as follows. Methylates ribosomal protein L11. The sequence is that of Ribosomal protein L11 methyltransferase from Shewanella baltica (strain OS185).